The sequence spans 105 residues: Heat shock protein HspQ (105 aa).

Positions 84–105 (QPKLDELSASIKKQLKTPRLRN) are disordered. The span at 96–105 (KQLKTPRLRN) shows a compositional bias: basic residues.

It belongs to the HspQ family.

The protein resides in the cytoplasm. In terms of biological role, involved in the degradation of certain denaturated proteins, including DnaA, during heat shock stress. The sequence is that of Heat shock protein HspQ from Wigglesworthia glossinidia brevipalpis.